The sequence spans 62 residues: Large ribosomal subunit protein bL28 (62 aa).

The tract at residues 1 to 28 (MARVCAITGRKARSGNSRSHAMNATKRK) is disordered.

This sequence belongs to the bacterial ribosomal protein bL28 family.

This Bacillus cytotoxicus (strain DSM 22905 / CIP 110041 / 391-98 / NVH 391-98) protein is Large ribosomal subunit protein bL28.